The sequence spans 602 residues: Elongation factor 4 (602 aa).

In terms of domain architecture, tr-type G spans 7–189; the sequence is SKIRNFCIIA…AVVSRIPHPQ (183 aa). GTP contacts are provided by residues 19 to 24 and 136 to 139; these read DHGKST and NKVD.

Belongs to the TRAFAC class translation factor GTPase superfamily. Classic translation factor GTPase family. LepA subfamily.

It localises to the cell inner membrane. It carries out the reaction GTP + H2O = GDP + phosphate + H(+). Functionally, required for accurate and efficient protein synthesis under certain stress conditions. May act as a fidelity factor of the translation reaction, by catalyzing a one-codon backward translocation of tRNAs on improperly translocated ribosomes. Back-translocation proceeds from a post-translocation (POST) complex to a pre-translocation (PRE) complex, thus giving elongation factor G a second chance to translocate the tRNAs correctly. Binds to ribosomes in a GTP-dependent manner. This Prochlorococcus marinus subsp. pastoris (strain CCMP1986 / NIES-2087 / MED4) protein is Elongation factor 4.